Reading from the N-terminus, the 431-residue chain is Histidinol dehydrogenase (431 aa).

Tyrosine 127, glutamine 189, and asparagine 212 together coordinate NAD(+). Serine 237, glutamine 259, and histidine 262 together coordinate substrate. Positions 259 and 262 each coordinate Zn(2+). Residues glutamate 326 and histidine 327 each act as proton acceptor in the active site. Substrate-binding residues include histidine 327, aspartate 360, glutamate 414, and histidine 419. Aspartate 360 provides a ligand contact to Zn(2+). Position 419 (histidine 419) interacts with Zn(2+).

This sequence belongs to the histidinol dehydrogenase family. The cofactor is Zn(2+).

The catalysed reaction is L-histidinol + 2 NAD(+) + H2O = L-histidine + 2 NADH + 3 H(+). It functions in the pathway amino-acid biosynthesis; L-histidine biosynthesis; L-histidine from 5-phospho-alpha-D-ribose 1-diphosphate: step 9/9. Functionally, catalyzes the sequential NAD-dependent oxidations of L-histidinol to L-histidinaldehyde and then to L-histidine. This Xylella fastidiosa (strain 9a5c) protein is Histidinol dehydrogenase.